We begin with the raw amino-acid sequence, 237 residues long: tRNA (guanine-N(7)-)-methyltransferase (237 aa).

S-adenosyl-L-methionine is bound by residues Glu67, Glu92, Asp119, and Asp141. Asp141 is a catalytic residue. Residues Lys145, Asp177, and Thr214–Glu217 contribute to the substrate site.

It belongs to the class I-like SAM-binding methyltransferase superfamily. TrmB family.

The enzyme catalyses guanosine(46) in tRNA + S-adenosyl-L-methionine = N(7)-methylguanosine(46) in tRNA + S-adenosyl-L-homocysteine. It functions in the pathway tRNA modification; N(7)-methylguanine-tRNA biosynthesis. Catalyzes the formation of N(7)-methylguanine at position 46 (m7G46) in tRNA. This is tRNA (guanine-N(7)-)-methyltransferase from Ruegeria pomeroyi (strain ATCC 700808 / DSM 15171 / DSS-3) (Silicibacter pomeroyi).